Consider the following 123-residue polypeptide: Cytochrome b-c1 complex subunit 7 (123 aa).

It belongs to the UQCRB/QCR7 family. In terms of assembly, component of the ubiquinol-cytochrome c oxidoreductase (cytochrome b-c1 complex, complex III, CIII), a multisubunit enzyme composed of 3 respiratory subunits cytochrome b, cytochrome c1 and Rieske protein, 2 core protein subunits, and additional low-molecular weight protein subunits. The complex exists as an obligatory dimer and forms supercomplexes (SCs) in the inner mitochondrial membrane with cytochrome c oxidase (complex IV, CIV). The N-terminus is blocked.

It localises to the mitochondrion inner membrane. Functionally, component of the ubiquinol-cytochrome c oxidoreductase, a multisubunit transmembrane complex that is part of the mitochondrial electron transport chain which drives oxidative phosphorylation. The respiratory chain contains 3 multisubunit complexes succinate dehydrogenase (complex II, CII), ubiquinol-cytochrome c oxidoreductase (cytochrome b-c1 complex, complex III, CIII) and cytochrome c oxidase (complex IV, CIV), that cooperate to transfer electrons derived from NADH and succinate to molecular oxygen, creating an electrochemical gradient over the inner membrane that drives transmembrane transport and the ATP synthase. The cytochrome b-c1 complex catalyzes electron transfer from ubiquinol to cytochrome c, linking this redox reaction to translocation of protons across the mitochondrial inner membrane, with protons being carried across the membrane as hydrogens on the quinol. In the process called Q cycle, 2 protons are consumed from the matrix, 4 protons are released into the intermembrane space and 2 electrons are passed to cytochrome c. The sequence is that of Cytochrome b-c1 complex subunit 7 from Solanum tuberosum (Potato).